A 294-amino-acid chain; its full sequence is Putative maltodextrin utilization protein YvdJ (294 aa).

4 helical membrane-spanning segments follow: residues 35 to 55 (LSFLFLFLTACLMAPLAVSFV), 184 to 204 (MIMMLAYTVVSMIQLLLTFVL), 228 to 248 (IAICASALPAFAAAAIGMVHF), and 249 to 269 (DLITVLMIHSCGVTLMISFAF).

The protein localises to the cell membrane. In terms of biological role, could have a role in maltodextrin utilization. This chain is Putative maltodextrin utilization protein YvdJ (yvdJ), found in Bacillus subtilis (strain 168).